The following is a 216-amino-acid chain: Elongation factor 1-beta (216 aa).

This sequence belongs to the EF-1-beta/EF-1-delta family. In terms of assembly, EF-1 is composed of 4 subunits: alpha, beta, delta, and gamma. Interacts with actin.

It localises to the cytoplasm. EF-1-beta and EF-1-delta stimulate the exchange of GDP bound to EF-1-alpha to GTP. This Dictyostelium discoideum (Social amoeba) protein is Elongation factor 1-beta (efa1B).